We begin with the raw amino-acid sequence, 76 residues long: Alpha/kappa-conotoxin-like pl14.3 (76 aa).

Residues 1–27 form the signal peptide; sequence MPSVRSVACCCLLWMMLSVQLVTPGSP. The propeptide occupies 28–39; it reads ATAQLSGQRTAR. 2 disulfide bridges follow: Cys-46-Cys-61 and Cys-50-Cys-63. Asp-64 bears the Aspartic acid 1-amide mark. The propeptide occupies 65–76; it reads GKRDVVSSSMAV.

It belongs to the conotoxin J superfamily. In terms of tissue distribution, expressed by the venom duct.

The protein resides in the secreted. Functionally, highly inhibits both nicotinic acetylcholine receptors (neuronal (alpha-3/beta-4) and muscular (alpha-1/beta-1/epsilon/delta) subtypes) and the voltage-gated potassium channel Kv1.6/KCNA6 subtype. The polypeptide is Alpha/kappa-conotoxin-like pl14.3 (Conus planorbis (Planorbis cone)).